Consider the following 356-residue polypeptide: Peptide chain release factor 1 (356 aa).

At Gln-232 the chain carries N5-methylglutamine. The disordered stretch occupies residues Glu-281–Ser-301.

It belongs to the prokaryotic/mitochondrial release factor family. In terms of processing, methylated by PrmC. Methylation increases the termination efficiency of RF1.

It is found in the cytoplasm. In terms of biological role, peptide chain release factor 1 directs the termination of translation in response to the peptide chain termination codons UAG and UAA. The protein is Peptide chain release factor 1 of Desulfovibrio desulfuricans (strain ATCC 27774 / DSM 6949 / MB).